A 496-amino-acid chain; its full sequence is Glycerol kinase (496 aa).

Thr12 is a binding site for ADP. ATP-binding residues include Thr12, Thr13, and Ser14. Thr12 contacts sn-glycerol 3-phosphate. Arg16 lines the ADP pocket. Sn-glycerol 3-phosphate-binding residues include Arg82, Glu83, and Tyr134. Residues Arg82, Glu83, and Tyr134 each coordinate glycerol. A Phosphohistidine; by HPr modification is found at His230. Residue Asp244 participates in sn-glycerol 3-phosphate binding. Asp244 and Gln245 together coordinate glycerol. Positions 266 and 309 each coordinate ADP. 4 residues coordinate ATP: Thr266, Gly309, Gln313, and Gly410. ADP-binding residues include Gly410 and Asn414.

Belongs to the FGGY kinase family. In terms of assembly, homotetramer and homodimer (in equilibrium). The phosphoenolpyruvate-dependent sugar phosphotransferase system (PTS), including enzyme I, and histidine-containing protein (HPr) are required for the phosphorylation, which leads to the activation of the enzyme.

It carries out the reaction glycerol + ATP = sn-glycerol 3-phosphate + ADP + H(+). The protein operates within polyol metabolism; glycerol degradation via glycerol kinase pathway; sn-glycerol 3-phosphate from glycerol: step 1/1. Activated by phosphorylation and inhibited by fructose 1,6-bisphosphate (FBP). In terms of biological role, key enzyme in the regulation of glycerol uptake and metabolism. Catalyzes the phosphorylation of glycerol to yield sn-glycerol 3-phosphate. This Bacillus mycoides (strain KBAB4) (Bacillus weihenstephanensis) protein is Glycerol kinase.